The chain runs to 392 residues: Bone morphogenetic protein 15 (392 aa).

The first 18 residues, 1-18, serve as a signal peptide directing secretion; sequence MVLLSILRILFLCELVLF. Positions 19–267 are excised as a propeptide; that stretch reads MEHRAQMAEG…ERESLLRRTR (249 aa). N-linked (GlcNAc...) asparagine glycosylation is found at Asn87, Asn147, and Asn237. Gln268 is subject to Pyrrolidone carboxylic acid; in P16 and P17. Ser273 carries the post-translational modification Phosphoserine; in P16. O-linked (HexNAc...) threonine; in P17 glycosylation is present at Thr277. 3 cysteine pairs are disulfide-bonded: Cys291–Cys357, Cys320–Cys389, and Cys324–Cys391. The N-linked (GlcNAc...) asparagine glycan is linked to Asn373.

This sequence belongs to the TGF-beta family. Homodimer. But, in contrast to other members of this family, cannot be disulfide-linked.

The protein localises to the secreted. May be involved in follicular development. Oocyte-specific growth/differentiation factor that stimulates folliculogenesis and granulosa cell (GC) growth. The polypeptide is Bone morphogenetic protein 15 (BMP15) (Homo sapiens (Human)).